Here is a 1122-residue protein sequence, read N- to C-terminus: Midnolin homolog (1122 aa).

Positions 69 to 143 (INLNISTTTG…IILIPNVETG (75 aa)) constitute a Ubiquitin-like domain. The tract at residues 210 to 300 (GGASGSSINA…SGQRSSGRIG (91 aa)) is required for interaction with Pc. Disordered stretches follow at residues 257-399 (VGGS…STLN), 596-630 (KHRH…HFFN), 645-677 (FATS…GAGA), 746-775 (GVVS…KSGS), 840-876 (APTT…RSKM), 886-905 (KCNS…ASGS), 922-955 (AATK…NGCT), and 1067-1122 (AAPA…DTAA). Over residues 266-298 (SGTSSSSSSTSSSSSSSSSSSRTRSSGQRSSGR) the composition is skewed to low complexity. 2 stretches are compositionally biased toward basic residues: residues 300–310 (GHGHVHSHQHP) and 321–352 (SHGH…HHHN). Residues 375-397 (PSSSGASGSAPATGTGQSQSSST) are compositionally biased toward low complexity. Over residues 596–610 (KHRHYHGQGHGHGHG) the composition is skewed to basic residues. Low complexity-rich tracts occupy residues 612–627 (GHSS…SSSH), 648–663 (SSSS…SSSP), 746–766 (GVVS…AASG), 856–867 (SGSSSTTSSGSG), 889–903 (SRAQ…TLAS), and 922–936 (AATK…SSHS). Polar residues-rich tracts occupy residues 937 to 954 (CCQT…SNGC) and 1071 to 1085 (NSIT…VNGN). Residues 1086–1107 (TSTAPATAATSAAAAPTAAPPS) are compositionally biased toward low complexity.

As to quaternary structure, interacts with PRC1 complex member polycomb protein Pc; the interaction targets Pc for ubiquitin-independent proteasomal degradation. Does not interact with PRC1 members Ph, Psc or Sce so does not appear to be a member of the PRC1 complex. Interacts with 26S proteasome regulatory subunit Rpn10.

Its subcellular location is the nucleus. Functionally, facilitates ubiquitin-independent proteasomal degradation of polycomb protein Pc by interacting directly with the proteasome and recruiting Pc to it. The polypeptide is Midnolin homolog (Drosophila melanogaster (Fruit fly)).